The chain runs to 673 residues: B3 domain-containing protein Os01g0905400 (673 aa).

Residues 1-34 (MVELIKVPKIEQEEGNADSHGKEKADVVHEEKTE) are compositionally biased toward basic and acidic residues. Residues 1-44 (MVELIKVPKIEQEEGNADSHGKEKADVVHEEKTEKVKRRRKRVS) are disordered. The TF-B3 1 DNA-binding region spans 79 to 172 (LPSFFKIMVG…VFTVQIFAIS (94 aa)). A disordered region spans residues 315–337 (PSFSYPESSNVMTADKESERSHQ). The segment covering 328 to 337 (ADKESERSHQ) has biased composition (basic and acidic residues). Positions 576 to 671 (SKKFCITIPP…ELSFQVLVPN (96 aa)) form a DNA-binding region, TF-B3 2.

The protein localises to the nucleus. This is B3 domain-containing protein Os01g0905400 from Oryza sativa subsp. japonica (Rice).